A 591-amino-acid chain; its full sequence is Coiled-coil domain-containing protein 148 (591 aa).

Coiled coils occupy residues 166–195 (VKKQ…SIKI), 352–417 (MLAK…KKKK), and 466–498 (ERRL…KQVA).

The polypeptide is Coiled-coil domain-containing protein 148 (CCDC148) (Homo sapiens (Human)).